The chain runs to 384 residues: Probable protein phosphatase 2C 48 (384 aa).

The region spanning 47–358 is the PPM-type phosphatase domain; that stretch reads ITGEFSMAVV…DDITVIVVFL (312 aa). Ser78 carries the post-translational modification Phosphoserine. Positions 89, 90, 290, and 349 each coordinate Mn(2+).

Belongs to the PP2C family. The cofactor is Mg(2+). Mn(2+) serves as cofactor.

The enzyme catalyses O-phospho-L-seryl-[protein] + H2O = L-seryl-[protein] + phosphate. The catalysed reaction is O-phospho-L-threonyl-[protein] + H2O = L-threonyl-[protein] + phosphate. May dephosphorylate and repress plasma membrane H(+)-ATPases (PM H(+)-ATPases, e.g. AHA1 and AHA2), thus influencing negatively plant growth and fitness. This chain is Probable protein phosphatase 2C 48, found in Arabidopsis thaliana (Mouse-ear cress).